The following is a 347-amino-acid chain: MEGIFAAYVLPALIIALKSVVLLVVLLIVVAYLLYADRKIWAAVQLRRGPNVVGPWGLFQRFADLLKFVFKEPIIPSGANKGVFLLAPFIFAVLAMATWAVIPVNEGWAVANINVGILYIFAISSLEVYGVIMGGWASNSKYPFLGALRSAAQMVSYEVSIGFVIVTVLLTVGSLNLTDIVLSQNTGLGTMLGLPASFLDWNWLCLFPMFVVFFISALAETNRPPFDLVEAESELVAGHMIEYSSTPFLLFFLGEYVAITLMCALMTVLFLGGWLPPVDVWFLSWVPGIIWFMLKLCFCFFLFAMVKAFVPRYRYDQLMRLGWKVFLPISLFMVVATATFLKVFGLA.

The next 8 membrane-spanning stretches (helical) occupy residues 13–33 (LIIA…VAYL), 82–102 (GVFL…WAVI), 115–135 (VGIL…IMGG), 161–181 (IGFV…TDIV), 198–218 (FLDW…ISAL), 248–268 (FLLF…LMTV), 286–306 (VPGI…FAMV), and 325–345 (VFLP…KVFG).

It belongs to the complex I subunit 1 family. As to quaternary structure, NDH-1 is composed of 14 different subunits. Subunits NuoA, H, J, K, L, M, N constitute the membrane sector of the complex.

Its subcellular location is the cell inner membrane. It catalyses the reaction a quinone + NADH + 5 H(+)(in) = a quinol + NAD(+) + 4 H(+)(out). NDH-1 shuttles electrons from NADH, via FMN and iron-sulfur (Fe-S) centers, to quinones in the respiratory chain. The immediate electron acceptor for the enzyme in this species is believed to be ubiquinone. Couples the redox reaction to proton translocation (for every two electrons transferred, four hydrogen ions are translocated across the cytoplasmic membrane), and thus conserves the redox energy in a proton gradient. This subunit may bind ubiquinone. This is NADH-quinone oxidoreductase subunit H from Brucella melitensis biotype 1 (strain ATCC 23456 / CCUG 17765 / NCTC 10094 / 16M).